A 276-amino-acid polypeptide reads, in one-letter code: MLCEDQHMSVENTPQKGSGSLNSSASSISIDVKPTMQSWAQEVRAEFGHSDEASSSLNSSAASCGSLAKKETADGNLESKDGEGREMAFEFLDGVNEVKFERLVKEEKLKTPYKRRHSFTPPSNENSRSNSPNSSNSSANGDAAAPKGGNNPHSRNSKKSGNFRAHKEEKRVRHNSYTSSTSSSSSYTEADPAILSRRQKQIDYGKNTAAYERYVEMVPKDERTRDHPRTPNKYGKYSRRAFDGLVKIWRKSLHIYDPPTQARDTAKDSNSDSDSD.

Disordered stretches follow at residues 1-35, 50-83, 104-236, and 254-276; these read MLCEDQHMSVENTPQKGSGSLNSSASSISIDVKPT, SDEASSSLNSSAASCGSLAKKETADGNLESKDGE, VKEE…KYGK, and HIYDPPTQARDTAKDSNSDSDSD. Low complexity-rich tracts occupy residues 18-29 and 53-67; these read SGSLNSSASSIS and ASSSLNSSAASCGSL. A phosphoserine mark is found at S24 and S29. The segment covering 68–83 has biased composition (basic and acidic residues); it reads AKKETADGNLESKDGE. S118 carries the post-translational modification Phosphoserine. Phosphothreonine is present on T120. Composition is skewed to low complexity over residues 121–146 and 176–188; these read PPSNENSRSNSPNSSNSSANGDAAAP and SYTSSTSSSSSYT. S123, S127, and S131 each carry phosphoserine. A Phosphotyrosine modification is found at Y177. The residue at position 182 (S182) is a Phosphoserine. An RNA-binding region spans residues 191–260; it reads DPAILSRRQK…KSLHIYDPPT (70 aa). Residues 213–229 show a composition bias toward basic and acidic residues; sequence RYVEMVPKDERTRDHPR.

This sequence belongs to the SLBP family. In terms of assembly, interacts with Sym and Cpsf73. In terms of tissue distribution, in late embryos, expression is restricted to proliferating (CNS and PNS) and endoreplicating (midgut) cell populations.

Involved in histone pre-mRNA 3' processing and couples histone mRNA production with the cell cycle. Both maternal and zygotic proteins play an essential and vital function for development. The sequence is that of Histone RNA hairpin-binding protein (Slbp) from Drosophila melanogaster (Fruit fly).